A 744-amino-acid chain; its full sequence is Junctophilin-3 (744 aa).

Residues 1–723 (MSSGGRFNFD…LKSSTGSAPI (723 aa)) lie on the Cytoplasmic side of the membrane. MORN repeat units follow at residues 15-37 (YCGG…KGQG), 39-60 (YTGS…SGNT), 61-82 (YQGT…GKWV), 83-105 (YKGE…GNGA), 107-129 (YEGT…DGGT), and 130-152 (YQGQ…PYGM). Residues 230 to 252 (SKSSLASQRSKQSSFRSEAGMST) form a disordered region. Over residues 231–244 (KSSLASQRSKQSSF) the composition is skewed to low complexity. MORN repeat units follow at residues 288 to 310 (YVGE…DGLK) and 311 to 333 (YEGE…DGTK). Phosphoserine is present on Ser-440. Thr-451 is modified (phosphothreonine). Disordered regions lie at residues 451-603 (TPLQ…LLEP) and 624-677 (CPQD…ESLR). Phosphoserine is present on Ser-457. Residue Thr-471 is modified to Phosphothreonine. Phosphoserine is present on residues Ser-475 and Ser-506. Ser-699 and Ser-706 each carry phosphoserine. The helical; Anchor for type IV membrane protein transmembrane segment at 724–744 (LVVMVILLNIGVAILFINFFI) threads the bilayer.

This sequence belongs to the junctophilin family. Specifically expressed in brain. Highest levels in the olfactory tubercle, caudate putamen, nucleus accumbens, hippocampal formation, piriform cortex and cerebellar cortex. Expressed in disctete neurons sites. In hippocampal formation, expressed in dendrites of hippocampal pyramidal and denate granule cells. In cerebellum, it is highly expressed in Purkinge cells, while it is weakly expressed in granular cells.

Its subcellular location is the cell membrane. It is found in the endoplasmic reticulum membrane. Its function is as follows. Junctophilins contribute to the formation of junctional membrane complexes (JMCs) which link the plasma membrane with the endoplasmic or sarcoplasmic reticulum in excitable cells. Provides a structural foundation for functional cross-talk between the cell surface and intracellular calcium release channels. JPH3 is brain-specific and appears to have an active role in certain neurons involved in motor coordination and memory. This is Junctophilin-3 (Jph3) from Mus musculus (Mouse).